A 635-amino-acid polypeptide reads, in one-letter code: 1-deoxy-D-xylulose-5-phosphate synthase (635 aa).

Thiamine diphosphate contacts are provided by residues His-78 and Gly-119–Ala-121. Residue Asp-150 coordinates Mg(2+). Residues Gly-151–Ser-152, Asn-179, Phe-291, and Glu-376 each bind thiamine diphosphate. Asn-179 is a Mg(2+) binding site.

This sequence belongs to the transketolase family. DXPS subfamily. Homodimer. Requires Mg(2+) as cofactor. The cofactor is thiamine diphosphate.

The enzyme catalyses D-glyceraldehyde 3-phosphate + pyruvate + H(+) = 1-deoxy-D-xylulose 5-phosphate + CO2. Its pathway is metabolic intermediate biosynthesis; 1-deoxy-D-xylulose 5-phosphate biosynthesis; 1-deoxy-D-xylulose 5-phosphate from D-glyceraldehyde 3-phosphate and pyruvate: step 1/1. Its function is as follows. Catalyzes the acyloin condensation reaction between C atoms 2 and 3 of pyruvate and glyceraldehyde 3-phosphate to yield 1-deoxy-D-xylulose-5-phosphate (DXP). This chain is 1-deoxy-D-xylulose-5-phosphate synthase, found in Chlorobaculum tepidum (strain ATCC 49652 / DSM 12025 / NBRC 103806 / TLS) (Chlorobium tepidum).